Here is a 237-residue protein sequence, read N- to C-terminus: Uridylate kinase (237 aa).

9–12 (KLSG) serves as a coordination point for ATP. UMP is bound at residue Gly-51. Gly-52 and Arg-56 together coordinate ATP. Residues Asp-71 and 132-139 (CGNPFFTT) each bind UMP. Thr-159, Tyr-165, and Asp-168 together coordinate ATP.

It belongs to the UMP kinase family. As to quaternary structure, homohexamer.

The protein localises to the cytoplasm. The enzyme catalyses UMP + ATP = UDP + ADP. It participates in pyrimidine metabolism; CTP biosynthesis via de novo pathway; UDP from UMP (UMPK route): step 1/1. With respect to regulation, inhibited by UTP. Catalyzes the reversible phosphorylation of UMP to UDP. The polypeptide is Uridylate kinase (Prochlorococcus marinus (strain MIT 9303)).